We begin with the raw amino-acid sequence, 425 residues long: MKVLIIGSGAREHAMAWAVARSSKVSTVFVAPGNGGTATMGGKVRNTPVKATDIDALLELVAKESIGLTVVGPEQPLEAGIVNRFREAGFKVVGPTAEAAQLETSKVFAKEFMKRHGIPTAGYEVFRDYASAKAFLETCPTFPQVIKASGLCAGKGVVVAMSRDEALEAIHEFFESRIFGDAADEVVIEAFLSGQEASVFALTDGQNYQLFLSAQDHKRIGEGDTGKNTGGMGAYAPAPLVTPEVMRRVEEEVIRPTLAGMRADGYAYTGFLYVGLMIDKGVPSVVEYNARLGDPETQVVLPMLKSDLFDALLASVEGGLEVVPFEMQEGAAATVVMASAGYPDAYETGKVITIDPTVNDMEGVLVFHAGTRRDGDALVTSGGRVLSVTACAGSLKEALDRVYRAVDAIEFEGAYCRRDIGAKAL.

Residues lysine 110–glutamate 317 form the ATP-grasp domain. Glutamate 137 to serine 198 lines the ATP pocket. Residues glutamate 287 and asparagine 289 each contribute to the Mg(2+) site.

It belongs to the GARS family. Mg(2+) serves as cofactor. Mn(2+) is required as a cofactor.

It carries out the reaction 5-phospho-beta-D-ribosylamine + glycine + ATP = N(1)-(5-phospho-beta-D-ribosyl)glycinamide + ADP + phosphate + H(+). Its pathway is purine metabolism; IMP biosynthesis via de novo pathway; N(1)-(5-phospho-D-ribosyl)glycinamide from 5-phospho-alpha-D-ribose 1-diphosphate: step 2/2. The polypeptide is Phosphoribosylamine--glycine ligase (Chlorobaculum tepidum (strain ATCC 49652 / DSM 12025 / NBRC 103806 / TLS) (Chlorobium tepidum)).